The chain runs to 412 residues: Serine hydroxymethyltransferase (412 aa).

(6S)-5,6,7,8-tetrahydrofolate-binding positions include Leu-117 and 121–123; that span reads GHL. Lys-226 carries the N6-(pyridoxal phosphate)lysine modification.

The protein belongs to the SHMT family. Homodimer. The cofactor is pyridoxal 5'-phosphate.

Its subcellular location is the cytoplasm. It catalyses the reaction (6R)-5,10-methylene-5,6,7,8-tetrahydrofolate + glycine + H2O = (6S)-5,6,7,8-tetrahydrofolate + L-serine. It functions in the pathway one-carbon metabolism; tetrahydrofolate interconversion. It participates in amino-acid biosynthesis; glycine biosynthesis; glycine from L-serine: step 1/1. In terms of biological role, catalyzes the reversible interconversion of serine and glycine with tetrahydrofolate (THF) serving as the one-carbon carrier. This reaction serves as the major source of one-carbon groups required for the biosynthesis of purines, thymidylate, methionine, and other important biomolecules. Also exhibits THF-independent aldolase activity toward beta-hydroxyamino acids, producing glycine and aldehydes, via a retro-aldol mechanism. This is Serine hydroxymethyltransferase from Staphylococcus epidermidis (strain ATCC 35984 / DSM 28319 / BCRC 17069 / CCUG 31568 / BM 3577 / RP62A).